We begin with the raw amino-acid sequence, 441 residues long: Xaa-Pro dipeptidase (441 aa).

Mn(2+)-binding residues include Asp-244, Asp-255, His-336, Glu-381, and Glu-420.

The protein belongs to the peptidase M24B family. Bacterial-type prolidase subfamily. The cofactor is Mn(2+).

The enzyme catalyses Xaa-L-Pro dipeptide + H2O = an L-alpha-amino acid + L-proline. In terms of biological role, splits dipeptides with a prolyl residue in the C-terminal position. This chain is Xaa-Pro dipeptidase, found in Xanthomonas axonopodis pv. citri (strain 306).